A 560-amino-acid chain; its full sequence is 2-succinyl-5-enolpyruvyl-6-hydroxy-3-cyclohexene-1-carboxylate synthase (560 aa).

The protein belongs to the TPP enzyme family. MenD subfamily. As to quaternary structure, homodimer. The cofactor is Mg(2+). It depends on Mn(2+) as a cofactor. Requires thiamine diphosphate as cofactor.

It carries out the reaction isochorismate + 2-oxoglutarate + H(+) = 5-enolpyruvoyl-6-hydroxy-2-succinyl-cyclohex-3-ene-1-carboxylate + CO2. The protein operates within quinol/quinone metabolism; 1,4-dihydroxy-2-naphthoate biosynthesis; 1,4-dihydroxy-2-naphthoate from chorismate: step 2/7. Its pathway is quinol/quinone metabolism; menaquinone biosynthesis. Its function is as follows. Catalyzes the thiamine diphosphate-dependent decarboxylation of 2-oxoglutarate and the subsequent addition of the resulting succinic semialdehyde-thiamine pyrophosphate anion to isochorismate to yield 2-succinyl-5-enolpyruvyl-6-hydroxy-3-cyclohexene-1-carboxylate (SEPHCHC). The chain is 2-succinyl-5-enolpyruvyl-6-hydroxy-3-cyclohexene-1-carboxylate synthase from Pectobacterium atrosepticum (strain SCRI 1043 / ATCC BAA-672) (Erwinia carotovora subsp. atroseptica).